Reading from the N-terminus, the 275-residue chain is uncharacterized protein (275 aa).

This is an uncharacterized protein from Methanocaldococcus jannaschii (strain ATCC 43067 / DSM 2661 / JAL-1 / JCM 10045 / NBRC 100440) (Methanococcus jannaschii).